The chain runs to 245 residues: Ribonuclease 3 (245 aa).

The RNase III domain maps to 19-144; the sequence is ASILEERTGH…LIATIYLDGG (126 aa). E57 is a binding site for Mg(2+). D61 is an active-site residue. 2 residues coordinate Mg(2+): D130 and E133. The active site involves E133. Residues 169–238 form the DRBM domain; that stretch reads DAKTELQEWA…AEAMLYREGV (70 aa).

Belongs to the ribonuclease III family. In terms of assembly, homodimer. It depends on Mg(2+) as a cofactor.

The protein resides in the cytoplasm. It carries out the reaction Endonucleolytic cleavage to 5'-phosphomonoester.. Functionally, digests double-stranded RNA. Involved in the processing of primary rRNA transcript to yield the immediate precursors to the large and small rRNAs (23S and 16S). Processes some mRNAs, and tRNAs when they are encoded in the rRNA operon. Processes pre-crRNA and tracrRNA of type II CRISPR loci if present in the organism. This chain is Ribonuclease 3, found in Brucella abortus (strain S19).